Consider the following 1399-residue polypeptide: Alpha-glucan water dikinase 1, chloroplastic (1399 aa).

A chloroplast-targeting transit peptide spans 1 to 75 (MSNSVVHNLL…GRPLSFVPRA (75 aa)). V76 bears the N-acetylvaline mark. Positions 265–306 (LLKKDNSNESPKSNGTSSSGREEKKKVSKQPERKKNYNTDKI) are disordered. Residues 272 to 283 (NESPKSNGTSSS) show a composition bias toward polar residues. Residues 284–306 (GREEKKKVSKQPERKKNYNTDKI) show a composition bias toward basic and acidic residues. H1004 serves as the catalytic Tele-phosphohistidine intermediate.

The protein belongs to the PEP-utilizing enzyme family. In terms of assembly, homodimer. Mg(2+) is required as a cofactor.

The protein localises to the plastid. It is found in the chloroplast. The enzyme catalyses [(1-&gt;4)-alpha-D-glucosyl](n) + n ATP + n H2O = [(1-&gt;4)-6-phospho-alpha-D-glucosyl](n) + n AMP + n phosphate + 2n H(+). Its function is as follows. Mediates the incorporation of phosphate into starch-like alpha-glucan, mostly at the C-6 position of glucose units. Acts as an overall regulator of starch mobilization. Required for starch degradation, suggesting that the phosphate content of starch regulates its degradability. The protein is Alpha-glucan water dikinase 1, chloroplastic of Arabidopsis thaliana (Mouse-ear cress).